Consider the following 666-residue polypeptide: tRNA 5-methylaminomethyl-2-thiouridine biosynthesis bifunctional protein MnmC (666 aa).

The tract at residues methionine 1–glutamate 253 is tRNA (mnm(5)s(2)U34)-methyltransferase. An FAD-dependent cmnm(5)s(2)U34 oxidoreductase region spans residues valine 283–proline 666.

In the N-terminal section; belongs to the methyltransferase superfamily. tRNA (mnm(5)s(2)U34)-methyltransferase family. It in the C-terminal section; belongs to the DAO family. It depends on FAD as a cofactor.

It is found in the cytoplasm. The catalysed reaction is 5-aminomethyl-2-thiouridine(34) in tRNA + S-adenosyl-L-methionine = 5-methylaminomethyl-2-thiouridine(34) in tRNA + S-adenosyl-L-homocysteine + H(+). Catalyzes the last two steps in the biosynthesis of 5-methylaminomethyl-2-thiouridine (mnm(5)s(2)U) at the wobble position (U34) in tRNA. Catalyzes the FAD-dependent demodification of cmnm(5)s(2)U34 to nm(5)s(2)U34, followed by the transfer of a methyl group from S-adenosyl-L-methionine to nm(5)s(2)U34, to form mnm(5)s(2)U34. This chain is tRNA 5-methylaminomethyl-2-thiouridine biosynthesis bifunctional protein MnmC, found in Legionella pneumophila subsp. pneumophila (strain Philadelphia 1 / ATCC 33152 / DSM 7513).